The following is a 165-amino-acid chain: Large ribosomal subunit protein uL11 (165 aa).

It belongs to the universal ribosomal protein uL11 family. As to quaternary structure, component of the large ribosomal subunit. Mature ribosomes consist of a small (40S) and a large (60S) subunit. The 40S subunit contains about 32 different proteins and 1 molecule of RNA (18S). The 60S subunit contains 45 different proteins and 3 molecules of RNA (25S, 5.8S and 5S).

It localises to the cytoplasm. Functionally, component of the ribosome, a large ribonucleoprotein complex responsible for the synthesis of proteins in the cell. The small ribosomal subunit (SSU) binds messenger RNAs (mRNAs) and translates the encoded message by selecting cognate aminoacyl-transfer RNA (tRNA) molecules. The large subunit (LSU) contains the ribosomal catalytic site termed the peptidyl transferase center (PTC), which catalyzes the formation of peptide bonds, thereby polymerizing the amino acids delivered by tRNAs into a polypeptide chain. The nascent polypeptides leave the ribosome through a tunnel in the LSU and interact with protein factors that function in enzymatic processing, targeting, and the membrane insertion of nascent chains at the exit of the ribosomal tunnel. This Candida albicans (strain SC5314 / ATCC MYA-2876) (Yeast) protein is Large ribosomal subunit protein uL11 (RPL12).